The sequence spans 757 residues: MDVNPILLFLKVPAQNAISTTFPYTGDPPYSHGTGTGYTMDTVNRTHQYSERGKWTTNTETGAPQLNPIDGPLPEDNEPSGYAQTDCVLEAMAFLEESHPGIFENSCIETMEVVQQTRVDKLTQGRQTYDWTLNRNQPAATALANTIEVFRSNGLTANESGRLIDFLKDVMESMDKEEIEITTHFQRKRRVRDNVTKKMVTQRTIGKRKQRLNKRSYLIRALTLNTMTKDAERGKLKRRAIATPGMQIRGFVYFVETLARSICEKLEQSGLPVGGNEKKAKLANVVRKMMTNSQDTEISFTITGDNTKWNENQNPRMFLAMITYITRTQPEWFRNVLSIAPIMFSNKMARLGKGYMFESKSMKLRTQIPAEMLANIDLKYFNDSTRKKIEKIRPLLIDGTASLSPGMMMGMFNMLSTVLGVSILNLGQKRYTKTTYWWDGLQSSDDFALIVNAPNHEGIQAGVDRFYRTCKLLGINMSKKKSYINRTGTFEFTSFFYRYGFVANFSMELPSFGVSGINESADMSIGVTVIKNNMINNDLGPATAQMALQLFIKDYRYTYRCHRGDTQIQTRRSFEIKKLWEQTRSKAGLLVSDGGPNLYNIRNLHIPEVCLKWELMDEDYQGRLCNPLNPFVSHKEIESVNNAVMMPAHGPAKNMEYDAVATTHSWIPKRNRSILNTSQRGILEDEQMYQRCCNLFEKFFPSSSYRRPVGISSMVEAMVSRARIDARIDFESGRIKKEEFTEIMKICSTIEELRRQK.

The interval 52 to 81 is disordered; that stretch reads RGKWTTNTETGAPQLNPIDGPLPEDNEPSG. Residues 55-64 are compositionally biased toward polar residues; sequence WTTNTETGAP. 2 consecutive short sequence motifs (nuclear localization signal) follow at residues 187–195 and 203–216; these read RKRRVRDNV and RTIG…NKRS. The promoter-binding site stretch occupies residues 249–256; sequence RGFVYFVE. Positions 286-483 constitute a RdRp catalytic domain; sequence VRKMMTNSQD…GINMSKKKSY (198 aa).

The protein belongs to the influenza viruses polymerase PB1 family. As to quaternary structure, influenza RNA polymerase is composed of three subunits: PB1, PB2 and PA. Interacts (via N-terminus) with PA (via C-terminus). Interacts (via C-terminus) with PB2 (via N-terminus); this interaction is essential for transcription initiation. Interacts (via C-terminus) with human PKP2 (via N-terminus); the interaction competitively inhibits the interaction between the RNA polymerase subunits PB1 and PB2. Phosphorylated by host PRKCA.

The protein resides in the host nucleus. It localises to the host cytoplasm. The catalysed reaction is RNA(n) + a ribonucleoside 5'-triphosphate = RNA(n+1) + diphosphate. RNA-dependent RNA polymerase which is responsible for replication and transcription of virus RNA segments. The transcription of viral mRNAs occurs by a unique mechanism called cap-snatching. 5' methylated caps of cellular mRNAs are cleaved after 10-13 nucleotides by PA. In turn, these short capped RNAs are used as primers by PB1 for transcription of viral mRNAs. During virus replication, PB1 initiates RNA synthesis and copy vRNA into complementary RNA (cRNA) which in turn serves as a template for the production of more vRNAs. The polypeptide is RNA-directed RNA polymerase catalytic subunit (Aves (Human)).